A 425-amino-acid chain; its full sequence is uncharacterized protein (425 aa).

One can recognise a TRAM domain in the interval M1 to K57. [4Fe-4S] cluster contacts are provided by C70, C76, C79, and C153. 3 residues coordinate S-adenosyl-L-methionine: Q260, D308, and D354. C381 acts as the Nucleophile in catalysis.

This sequence belongs to the class I-like SAM-binding methyltransferase superfamily. RNA M5U methyltransferase family.

This is an uncharacterized protein from Aquifex aeolicus (strain VF5).